The chain runs to 64 residues: Translation machinery-associated protein 7B (64 aa).

The segment at 1 to 38 is disordered; that stretch reads MSSHEGGKKKALKQPKKQAKEMDEEEKAFKQKQKEEQK. Positions 27 to 38 are enriched in basic and acidic residues; sequence KAFKQKQKEEQK.

It belongs to the TMA7 family.

The sequence is that of Translation machinery-associated protein 7B from Homo sapiens (Human).